Here is a 63-residue protein sequence, read N- to C-terminus: Metallothionein-1 (63 aa).

2 repeats span residues 23–30 and 56–63; these read CGDKCECK.

Belongs to the metallothionein superfamily. Type 9 family.

Its function is as follows. The metallothioneins are involved in the cellular sequestration of toxic metal ions. This Candida glabrata (strain ATCC 2001 / BCRC 20586 / JCM 3761 / NBRC 0622 / NRRL Y-65 / CBS 138) (Yeast) protein is Metallothionein-1 (MT-I).